The following is a 321-amino-acid chain: Biotin synthase (321 aa).

Residues 45–274 (FHGNRVDLCS…GALIRLCGGR (230 aa)) enclose the Radical SAM core domain. 3 residues coordinate [4Fe-4S] cluster: cysteine 63, cysteine 67, and cysteine 70. The [2Fe-2S] cluster site is built by cysteine 139, cysteine 199, and arginine 269.

Belongs to the radical SAM superfamily. Biotin synthase family. As to quaternary structure, homodimer. [4Fe-4S] cluster is required as a cofactor. Requires [2Fe-2S] cluster as cofactor.

The catalysed reaction is (4R,5S)-dethiobiotin + (sulfur carrier)-SH + 2 reduced [2Fe-2S]-[ferredoxin] + 2 S-adenosyl-L-methionine = (sulfur carrier)-H + biotin + 2 5'-deoxyadenosine + 2 L-methionine + 2 oxidized [2Fe-2S]-[ferredoxin]. It participates in cofactor biosynthesis; biotin biosynthesis; biotin from 7,8-diaminononanoate: step 2/2. Catalyzes the conversion of dethiobiotin (DTB) to biotin by the insertion of a sulfur atom into dethiobiotin via a radical-based mechanism. The chain is Biotin synthase from Pelotomaculum thermopropionicum (strain DSM 13744 / JCM 10971 / SI).